Reading from the N-terminus, the 414-residue chain is Secernin-1 (414 aa).

A2 is modified (N-acetylalanine). C9 is an active-site residue.

Belongs to the peptidase C69 family. Secernin subfamily.

The protein localises to the cytoplasm. Its function is as follows. Regulates exocytosis in mast cells. Increases both the extent of secretion and the sensitivity of mast cells to stimulation with calcium. The polypeptide is Secernin-1 (SCRN1) (Homo sapiens (Human)).